Reading from the N-terminus, the 379-residue chain is Homoserine O-acetyltransferase (379 aa).

The AB hydrolase-1 domain occupies 52 to 356 (NVVVVLHALT…VYGHDGFLVE (305 aa)). The active-site Nucleophile is Ser-157. Arg-227 contacts substrate. Residues Asp-320 and His-350 contribute to the active site. Asp-351 provides a ligand contact to substrate.

This sequence belongs to the AB hydrolase superfamily. MetX family. As to quaternary structure, homodimer.

It is found in the cytoplasm. The catalysed reaction is L-homoserine + acetyl-CoA = O-acetyl-L-homoserine + CoA. It functions in the pathway amino-acid biosynthesis; L-methionine biosynthesis via de novo pathway; O-acetyl-L-homoserine from L-homoserine: step 1/1. Its function is as follows. Transfers an acetyl group from acetyl-CoA to L-homoserine, forming acetyl-L-homoserine. This is Homoserine O-acetyltransferase from Mycobacterium tuberculosis (strain CDC 1551 / Oshkosh).